Consider the following 426-residue polypeptide: Phosphomethylpyrimidine synthase (426 aa).

Substrate is bound by residues asparagine 65, methionine 94, tyrosine 123, histidine 162, 184–186 (SRG), 225–228 (DGMR), and glutamate 264. Zn(2+) is bound at residue histidine 268. Tyrosine 291 provides a ligand contact to substrate. Histidine 332 serves as a coordination point for Zn(2+). Cysteine 408, cysteine 411, and cysteine 415 together coordinate [4Fe-4S] cluster.

The protein belongs to the ThiC family. It depends on [4Fe-4S] cluster as a cofactor.

The enzyme catalyses 5-amino-1-(5-phospho-beta-D-ribosyl)imidazole + S-adenosyl-L-methionine = 4-amino-2-methyl-5-(phosphooxymethyl)pyrimidine + CO + 5'-deoxyadenosine + formate + L-methionine + 3 H(+). It participates in cofactor biosynthesis; thiamine diphosphate biosynthesis. Its function is as follows. Catalyzes the synthesis of the hydroxymethylpyrimidine phosphate (HMP-P) moiety of thiamine from aminoimidazole ribotide (AIR) in a radical S-adenosyl-L-methionine (SAM)-dependent reaction. The sequence is that of Phosphomethylpyrimidine synthase from Methanococcus maripaludis (strain C6 / ATCC BAA-1332).